Here is a 629-residue protein sequence, read N- to C-terminus: tRNA uridine 5-carboxymethylaminomethyl modification enzyme MnmG (629 aa).

Residue 13 to 18 participates in FAD binding; that stretch reads GGGHAG. Residue 273–287 participates in NAD(+) binding; that stretch reads GPRYCPSIEDKVNRF.

This sequence belongs to the MnmG family. As to quaternary structure, homodimer. Heterotetramer of two MnmE and two MnmG subunits. FAD serves as cofactor.

It is found in the cytoplasm. NAD-binding protein involved in the addition of a carboxymethylaminomethyl (cmnm) group at the wobble position (U34) of certain tRNAs, forming tRNA-cmnm(5)s(2)U34. The polypeptide is tRNA uridine 5-carboxymethylaminomethyl modification enzyme MnmG (Shewanella pealeana (strain ATCC 700345 / ANG-SQ1)).